The sequence spans 461 residues: General transcription and DNA repair factor IIH subunit SSL1 (461 aa).

The disordered stretch occupies residues 1–70; the sequence is MAPVVISESE…RLSNRNLQGS (70 aa). A compositionally biased stretch (basic and acidic residues) spans 26-37; the sequence is VHFDGEGDDRVD. A compositionally biased stretch (basic residues) spans 53–63; the sequence is HVQRKKKKRLS. One can recognise a VWFA domain in the interval 125-304; it reads SLILTLDCSE…THLKELFNEA (180 aa). Residues 349-366 form a C4-type zinc finger; it reads CPNCHSKVCSLPTVCPCC.

Belongs to the GTF2H2 family. In terms of assembly, component of the 7-subunit TFIIH core complex composed of XPB/SSL2, XPD/RAD3, SSL1, TFB1, TFB2, TFB4 and TFB5, which is active in NER. The core complex associates with the 3-subunit CTD-kinase module TFIIK composed of CCL1, KIN28 and TFB3 to form the 10-subunit holoenzyme (holo-TFIIH) active in transcription. An additionnal subunit, TFB6, plays a role in the dissociation of the SSL2 helicase from TFIIH after transcription initiation.

It is found in the nucleus. In terms of biological role, component of the general transcription and DNA repair factor IIH (TFIIH) core complex, which is involved in general and transcription-coupled nucleotide excision repair (NER) of damaged DNA and, when complexed to TFIIK, in RNA transcription by RNA polymerase II. In NER, TFIIH acts by opening DNA around the lesion to allow the excision of the damaged oligonucleotide and its replacement by a new DNA fragment. In transcription, TFIIH has an essential role in transcription initiation. When the pre-initiation complex (PIC) has been established, TFIIH is required for promoter opening and promoter escape. Phosphorylation of the C-terminal tail (CTD) of the largest subunit of RNA polymerase II by the kinase module TFIIK controls the initiation of transcription. This Saccharomyces cerevisiae (strain ATCC 204508 / S288c) (Baker's yeast) protein is General transcription and DNA repair factor IIH subunit SSL1 (SSL1).